The following is a 232-amino-acid chain: Protein G1-like3 (232 aa).

Disordered regions lie at residues 20–77 (AGLL…YEAQ) and 189–232 (ARAR…GAAC). Residues 38 to 53 (AGGGGGGGGDGAGGSS) are compositionally biased toward gly residues. The region spanning 73 to 200 (RYEAQKRRDW…ARGVSYEKKK (128 aa)) is the ALOG domain. A Nuclear localization signal motif is present at residues 198 to 202 (KKKRK). A compositionally biased stretch (pro residues) spans 216 to 232 (PHPPPPPPPPPSAGAAC).

This sequence belongs to the plant homeotic and developmental regulators ALOG protein family.

The protein resides in the nucleus. Functionally, probable transcription regulator that acts as a developmental regulator by promoting cell growth in response to light. The protein is Protein G1-like3 of Oryza sativa subsp. indica (Rice).